Reading from the N-terminus, the 356-residue chain is Vanillin synthase, chloroplastic (356 aa).

N-linked (GlcNAc...) asparagine glycosylation is present at asparagine 122. Cystine bridges form between cysteine 159–cysteine 202 and cysteine 193–cysteine 235. Cysteine 162 is an active-site residue. A glycan (N-linked (GlcNAc...) asparagine) is linked at asparagine 251. Cysteine 293 and cysteine 343 are joined by a disulfide. Catalysis depends on residues histidine 302 and asparagine 322.

It belongs to the peptidase C1 family. As to quaternary structure, forms homodimers, homotrimers and homotetramers. In terms of tissue distribution, accumulates in the inner part of vanilla pods (at protein level). Expressed in single cells located a few cell layers from the inner epidermis.

It localises to the plastid. Its subcellular location is the chloroplast. The enzyme catalyses (E)-ferulate + H2O = vanillin + acetate. It carries out the reaction 4-O-beta-D-glucosyl-trans-ferulate + H2O = 4-O-beta-D-glucosyl-vanillin + acetate. The protein operates within aromatic compound metabolism; phenylpropanoid biosynthesis. Involved in the biosynthesis of vanillin (4-hydroxy-3-methoxy-benzaldehyde) and derivative natural products, key components of vanilla pods flavor. Catalyzes the double carbon bond cleavage of ferulic acid to vanillin and of their respective glucosides via a coupled non-oxidative hydratase/lyase reaction. Inactive toward p-coumaric acid, caffeic acid and their glucosides derivatives. The protein is Vanillin synthase, chloroplastic of Vanilla planifolia (Vanilla).